Consider the following 743-residue polypeptide: POU domain, class 2, transcription factor 1 (743 aa).

Over residues 1 to 11 the composition is skewed to polar residues; that stretch reads MNNPSETSKPS. Disordered stretches follow at residues 1-34, 67-95, 258-283, and 357-381; these read MNNPSETSKPSMESGDGNTGTQTNGLDFQKQPVP, SLNVQSKSNEESGDSQQPSQPSQQPSVQA, ATPIQTLPQSQSTPKRIDTPSLEEPS, and SSDSSLSSPSALNSPGIEGLSRRRK. Residues 81 to 95 show a composition bias toward low complexity; sequence SQQPSQPSQQPSVQA. A phosphothreonine mark is found at Thr270 and Thr276. In terms of domain architecture, POU-specific spans 280 to 354; that stretch reads EEPSDLEELE…LLEKWLNDAE (75 aa). Ser283 carries the phosphoserine modification. The segment covering 357-371 has biased composition (low complexity); it reads SSDSSLSSPSALNSP. The segment at residues 379–438 is a DNA-binding region (homeobox); that stretch reads RRKKRTSIETNIRVALEKSFLENQKPTSEEITMIADQLNMEKEVIRVWFCNRRQKEKRIN. Phosphoserine occurs at positions 385 and 448. Polar residues predominate over residues 494–504; it reads VTGTSDTTSNN. The interval 494 to 557 is disordered; it reads VTGTSDTTSN…TTSTPLSSPL (64 aa). A compositionally biased stretch (low complexity) spans 505–557; the sequence is TATVISTAPPASSAVTSPSLSPSPSASASTSEASSASETSTTQTTSTPLSSPL.

Belongs to the POU transcription factor family. Class-2 subfamily. As to quaternary structure, interacts with POU2AF1; the interaction increases POU2F1 transactivation activity. Interacts with NR3C1, AR, PGR and HCFC1. (Microbial infection) Associates with the herpes simplex virus VP16-induced complex; binding to HCFC1 activates the viral transcriptional activator VP16 for association with POU2F1, to form a multiprotein-DNA complex responsible for activating transcription of the viral immediate early genes. In terms of assembly, (Microbial infection) Interacts with human herpesvirus 8 (KSHV) protein RTA/ORF50; this interaction enhances RTA/ORF50-mediated transactivation of several viral promoters including K-bZIP promoter. Post-translationally, phosphorylated by PRKDC. In terms of tissue distribution, ubiquitous. Isoform 2 is lymphocyte-specific.

The protein resides in the nucleus. In terms of biological role, transcription factor that binds to the octamer motif (5'-ATTTGCAT-3') and activates the promoters of the genes for some small nuclear RNAs (snRNA) and of genes such as those for histone H2B and immunoglobulins. Modulates transcription transactivation by NR3C1, AR and PGR. Functionally, (Microbial infection) In case of human herpes simplex virus (HSV) infection, POU2F1 forms a multiprotein-DNA complex with the viral transactivator protein VP16 and HCFC1 thereby enabling the transcription of the viral immediate early genes. The sequence is that of POU domain, class 2, transcription factor 1 (POU2F1) from Homo sapiens (Human).